The primary structure comprises 216 residues: MKNVAIVGDGGHGKVIRELINARSDTRLAAVLDDKFKTFEGGKEWYTGPPKAVTELRRLIPDVLFLIAVGNNSVRKQLAERLGLGKDDFITLIHPSAIVSKSAVIGEGTVIMAGAIIQADARIGAHCIINTGAVAEHDNQISDYVHLSPRATLSGAVSVQEGAHVGTGASVIPQIIIGAWSIVGAGSAVIRSIPDRVTAAGAPARIISSIQTSNKG.

His-137 (proton acceptor) is an active-site residue. An acetyl-CoA-binding site is contributed by His-146.

This sequence belongs to the transferase hexapeptide repeat family. In terms of assembly, forms oligomers.

The enzyme catalyses UDP-N-acetylbacillosamine + acetyl-CoA = UDP-N,N'-diacetylbacillosamine + CoA + H(+). Catalyzes the conversion of UDP-2,4,6-trideoxy-2-acetamido-4-amino glucose to UDP-2,4,6-trideoxy-2,4-diacetamido glucose, commonly known as UDP-N,N'-diacetylbacillosamine (UDP-diNAcBac). In Bacillus subtilis (strain 168), this protein is UDP-N-acetylbacillosamine N-acetyltransferase.